Here is a 301-residue protein sequence, read N- to C-terminus: 2-methoxy-6-polyprenyl-1,4-benzoquinol methylase, mitochondrial (301 aa).

Residues 1-16 (MQTTRSTRLLSLARRF) constitute a mitochondrion transit peptide. Residues 20–31 (RTASQSAQNSKG) show a composition bias toward polar residues. The disordered stretch occupies residues 20-44 (RTASQSAQNSKGMASGAESISGKEK). S-adenosyl-L-methionine-binding positions include threonine 111, aspartate 139, and 173 to 174 (DA).

This sequence belongs to the class I-like SAM-binding methyltransferase superfamily. MenG/UbiE family. Component of a multi-subunit COQ enzyme complex.

Its subcellular location is the mitochondrion inner membrane. It carries out the reaction a 2-methoxy-6-(all-trans-polyprenyl)benzene-1,4-diol + S-adenosyl-L-methionine = a 5-methoxy-2-methyl-3-(all-trans-polyprenyl)benzene-1,4-diol + S-adenosyl-L-homocysteine + H(+). Its pathway is cofactor biosynthesis; ubiquinone biosynthesis. In terms of biological role, methyltransferase required for the conversion of 2-polyprenyl-6-methoxy-1,4-benzoquinol (DDMQH2) to 2-polyprenyl-3-methyl-6-methoxy-1,4-benzoquinol (DMQH2). This chain is 2-methoxy-6-polyprenyl-1,4-benzoquinol methylase, mitochondrial, found in Drosophila melanogaster (Fruit fly).